Here is a 467-residue protein sequence, read N- to C-terminus: Dimethylamine methyltransferase MtbB1 (467 aa).

A non-standard amino acid (pyrrolysine) is located at residue O356.

This sequence belongs to the dimethylamine methyltransferase family.

The catalysed reaction is Co(I)-[dimethylamine-specific corrinoid protein] + dimethylamine + H(+) = methyl-Co(III)-[dimethylamine-specific corrinoid protein] + methylamine. It functions in the pathway one-carbon metabolism; methanogenesis from dimethylamine. Functionally, catalyzes the transfer of a methyl group from dimethylamine to the corrinoid cofactor of MtbC. The protein is Dimethylamine methyltransferase MtbB1 (mtbB1) of Methanosarcina acetivorans (strain ATCC 35395 / DSM 2834 / JCM 12185 / C2A).